The sequence spans 32 residues: Photosystem II reaction center protein Z (32 aa).

The chain crosses the membrane as a helical span at residues 9-31 (FILLGAVTWAILVFIVGSLNSYV).

Belongs to the PsbZ family. PSII is composed of 1 copy each of membrane proteins PsbA, PsbB, PsbC, PsbD, PsbE, PsbF, PsbH, PsbI, PsbJ, PsbK, PsbL, PsbM, PsbT, PsbY, PsbZ, Psb30/Ycf12, at least 3 peripheral proteins of the oxygen-evolving complex and a large number of cofactors. It forms dimeric complexes.

The protein localises to the plastid. It localises to the chloroplast thylakoid membrane. In terms of biological role, may control the interaction of photosystem II (PSII) cores with the light-harvesting antenna, regulates electron flow through the 2 photosystem reaction centers. PSII is a light-driven water plastoquinone oxidoreductase, using light energy to abstract electrons from H(2)O, generating a proton gradient subsequently used for ATP formation. The polypeptide is Photosystem II reaction center protein Z (Euglena stellata).